Consider the following 495-residue polypeptide: ATP synthase subunit beta, chloroplastic (495 aa).

172-179 serves as a coordination point for ATP; that stretch reads GGAGVGKT.

This sequence belongs to the ATPase alpha/beta chains family. F-type ATPases have 2 components, CF(1) - the catalytic core - and CF(0) - the membrane proton channel. CF(1) has five subunits: alpha(3), beta(3), gamma(1), delta(1), epsilon(1). CF(0) has four main subunits: a(1), b(1), b'(1) and c(9-12).

It is found in the plastid. The protein resides in the chloroplast thylakoid membrane. The catalysed reaction is ATP + H2O + 4 H(+)(in) = ADP + phosphate + 5 H(+)(out). Functionally, produces ATP from ADP in the presence of a proton gradient across the membrane. The catalytic sites are hosted primarily by the beta subunits. The protein is ATP synthase subunit beta, chloroplastic of Eucomis bicolor (King's flower).